Reading from the N-terminus, the 755-residue chain is Atypical kinase coq-8, mitochondrial (755 aa).

The segment at 57-78 (QDVDPLKEPNKTNAPLLSPTLP) is disordered. A compositionally biased stretch (polar residues) spans 67-78 (KTNAPLLSPTLP). ATP contacts are provided by residues 435–443 (FACASIGQV) and Lys457. Residue Asp587 is the Proton acceptor of the active site.

It belongs to the protein kinase superfamily. ADCK protein kinase family.

Its subcellular location is the mitochondrion. It functions in the pathway cofactor biosynthesis; ubiquinone biosynthesis. Atypical kinase involved in the biosynthesis of coenzyme Q, also named ubiquinone, an essential lipid-soluble electron transporter for aerobic cellular respiration. Its substrate specificity is still unclear: may act as a protein kinase that mediates phosphorylation of coq-3. According to other reports, acts as a small molecule kinase, possibly a lipid kinase that phosphorylates a prenyl lipid in the ubiquinone biosynthesis pathway, as suggested by its ability to bind coenzyme Q lipid intermediates. This Caenorhabditis elegans protein is Atypical kinase coq-8, mitochondrial (coq-8).